The following is a 430-amino-acid chain: Tol-Pal system protein TolB (430 aa).

Residues 1–26 (MSLMTKLGLRTLVASCLIAVGGAAHA) form the signal peptide.

The protein belongs to the TolB family. In terms of assembly, the Tol-Pal system is composed of five core proteins: the inner membrane proteins TolA, TolQ and TolR, the periplasmic protein TolB and the outer membrane protein Pal. They form a network linking the inner and outer membranes and the peptidoglycan layer.

The protein resides in the periplasm. In terms of biological role, part of the Tol-Pal system, which plays a role in outer membrane invagination during cell division and is important for maintaining outer membrane integrity. This is Tol-Pal system protein TolB from Paraburkholderia phytofirmans (strain DSM 17436 / LMG 22146 / PsJN) (Burkholderia phytofirmans).